The chain runs to 764 residues: Dehydrocurvularin biosynthesis regulator (764 aa).

Residues 28–59 (CWECKRRKMKCIFDPRITSTSCNGCRQRGSPC) constitute a DNA-binding region (zn(2)-C6 fungal-type). Disordered stretches follow at residues 73 to 94 (HGAN…SDDA), 112 to 136 (YRYL…ASTC), and 633 to 672 (FPTS…PALS). Positions 77–88 (DSASLDASTPIA) are enriched in polar residues. Over residues 663–672 (HPNTPSPALS) the composition is skewed to polar residues.

It is found in the nucleus. Its function is as follows. Transcription factor involved in regulation of the dehydrocurvularin biosynthesis gene cluster. This Alternaria cinerariae protein is Dehydrocurvularin biosynthesis regulator.